The following is a 278-amino-acid chain: Biotin synthase (278 aa).

One can recognise a Radical SAM core domain in the interval 1 to 227 (MQIMLCAISN…QSVVMVAGGR (227 aa)). Residues C16, C20, and C23 each contribute to the [4Fe-4S] cluster site. [2Fe-2S] cluster-binding residues include C60, C95, and C153.

This sequence belongs to the radical SAM superfamily. Biotin synthase family. Homodimer. [4Fe-4S] cluster is required as a cofactor. It depends on [2Fe-2S] cluster as a cofactor.

The catalysed reaction is (4R,5S)-dethiobiotin + (sulfur carrier)-SH + 2 reduced [2Fe-2S]-[ferredoxin] + 2 S-adenosyl-L-methionine = (sulfur carrier)-H + biotin + 2 5'-deoxyadenosine + 2 L-methionine + 2 oxidized [2Fe-2S]-[ferredoxin]. It functions in the pathway cofactor biosynthesis; biotin biosynthesis; biotin from 7,8-diaminononanoate: step 2/2. In terms of biological role, catalyzes the conversion of dethiobiotin (DTB) to biotin by the insertion of a sulfur atom into dethiobiotin via a radical-based mechanism. This chain is Biotin synthase, found in Campylobacter jejuni subsp. jejuni serotype O:23/36 (strain 81-176).